We begin with the raw amino-acid sequence, 224 residues long: MSDTPSKGPATGSLTERQRTILEVIRASVNERGYPPSIREIGDAVGLTSTSSVAHQLRTLEQKGFLRRDPNRPRAVDVRGIDDAGTPSATTDVIGSGDLPEPTFVPVLGRIAAGGPILAEEAVEDVFPLPRELVGEGSLFLLKVVGESMVDAAICDGDWVVVRQQNVADNGDIVAAMIDGEATVKTFKRTSGQVWLMPHNPLFEPIPGNDAAILGKVVTVIRKV.

Positions 38-58 (IREIGDAVGLTSTSSVAHQLR) form a DNA-binding region, H-T-H motif. A compositionally biased stretch (basic and acidic residues) spans 71–82 (NRPRAVDVRGID). Residues 71-96 (NRPRAVDVRGIDDAGTPSATTDVIGS) form a disordered region. Active-site for autocatalytic cleavage activity residues include S148 and K185.

This sequence belongs to the peptidase S24 family. In terms of assembly, homodimer.

The enzyme catalyses Hydrolysis of Ala-|-Gly bond in repressor LexA.. In terms of biological role, represses a number of genes involved in the response to DNA damage (SOS response), including recA and lexA. In the presence of single-stranded DNA, RecA interacts with LexA causing an autocatalytic cleavage which disrupts the DNA-binding part of LexA, leading to derepression of the SOS regulon and eventually DNA repair. This is LexA repressor from Mycobacteroides abscessus (strain ATCC 19977 / DSM 44196 / CCUG 20993 / CIP 104536 / JCM 13569 / NCTC 13031 / TMC 1543 / L948) (Mycobacterium abscessus).